Consider the following 160-residue polypeptide: Globin-like protein (160 aa).

Residues 2–152 (SMTRQEIQDL…FNAECQVHLK (151 aa)) form the Globin domain. His-101 contributes to the heme binding site.

This sequence belongs to the globin family.

Its subcellular location is the cytoplasm. May be a globin and may play a role in oxygen transport. This Caenorhabditis briggsae protein is Globin-like protein (glb-1).